Consider the following 859-residue polypeptide: Envelope glycoprotein (859 aa).

Positions 1 to 6 are excised as a propeptide; it reads MVSIAF. Residues 7 to 614 are Extracellular-facing; the sequence is YGGIPGGIST…KDLWSHIGNW (608 aa). Asn40 carries an N-linked (GlcNAc...) asparagine; by host glycan. Positions 47 to 66 are disordered; that stretch reads AESKEARDQEMNLKEESKEE. Basic and acidic residues predominate over residues 48 to 66; sequence ESKEARDQEMNLKEESKEE. 12 N-linked (GlcNAc...) asparagine; by host glycosylation sites follow: Asn112, Asn141, Asn148, Asn186, Asn214, Asn233, Asn244, Asn340, Asn368, Asn399, Asn406, and Asn411. The tract at residues 446–466 is fusion peptide; the sequence is FGISAIVAAIVAATAIAASAT. 2 N-linked (GlcNAc...) asparagine; by host glycosylation sites follow: Asn483 and Asn490. Positions 498-513 are immunosuppression; it reads LIERQIKILYAMILQT. Residues Asn550 and Asn557 are each glycosylated (N-linked (GlcNAc...) asparagine; by host). Coiled coils occupy residues 576–624 and 663–699; these read ILTT…SIIK and KKFH…YYKQ. The helical transmembrane segment at 615–635 threads the bilayer; sequence IPGLGASIIKYIVMFLLIYLL. Topologically, residues 636–859 are cytoplasmic; sequence LTSSPKILRA…TSHVSMPQYV (224 aa).

The mature envelope protein (Env) consists of a trimer of SU-TM heterodimers attached by noncovalent interactions or by a labile interchain disulfide bond. In terms of processing, specific enzymatic cleavages in vivo yield mature proteins. Envelope glycoproteins are synthesized as an inactive precursor that is N-glycosylated and processed likely by host cell furin or by a furin-like protease in the Golgi to yield the mature SU and TM proteins. The cleavage site between SU and TM requires the minimal sequence [KR]-X-[KR]-R.

It localises to the virion membrane. It is found in the host cell membrane. In terms of biological role, the surface protein (SU) attaches the virus to the host cell by binding to its receptor. This interaction triggers the refolding of the transmembrane protein (TM) and is thought to activate its fusogenic potential by unmasking its fusion peptide. Fusion occurs at the host cell plasma membrane. The transmembrane protein (TM) acts as a class I viral fusion protein. Under the current model, the protein has at least 3 conformational states: pre-fusion native state, pre-hairpin intermediate state, and post-fusion hairpin state. During viral and target cell membrane fusion, the coiled coil regions (heptad repeats) assume a trimer-of-hairpins structure, positioning the fusion peptide in close proximity to the C-terminal region of the ectodomain. The formation of this structure appears to drive apposition and subsequent fusion of viral and target cell membranes. Membranes fusion leads to delivery of the nucleocapsid into the cytoplasm. This Equus asinus (Donkey) protein is Envelope glycoprotein (env).